The following is a 345-amino-acid chain: MLKVAINGFGRIGRNVLRAVYESGKHQQIKVVAVNELAQPEAMAHLLQYDTSHGRFGKKISHDQEHLNVHHESGEYDAIRILHLSEIELLPWRDLEVDIVLDCTGVYGSKADGLAHIEAGAKKVLFSHPGANDLDNTIIYGVNHETLKDEHRVVSNGSCTTNCIVPIIKVLDEAFGIESGTITTIHSSMNDQQVIDAYHNDLRRTRAASQSIIPVDTKLHKGIERIFPKFSNKFEAISVRVPTVNVTAMDLSVTINTNVKVNDVNQTIVNASQCTLRNIVDYTESPLVSIDFNHDPHSAIVDGTQTRVSNGQLVKMLVWCDNEWGFANRMLDTALAMKASSQVEL.

11–12 (RI) lines the NAD(+) pocket. Substrate contacts are provided by residues 158–160 (SCT), Arg-204, 217–218 (TK), and Arg-240. The Nucleophile role is filled by Cys-159. Residue Asn-322 participates in NAD(+) binding.

Belongs to the glyceraldehyde-3-phosphate dehydrogenase family. Epd subfamily. Homotetramer.

Its subcellular location is the cytoplasm. It catalyses the reaction D-erythrose 4-phosphate + NAD(+) + H2O = 4-phospho-D-erythronate + NADH + 2 H(+). It functions in the pathway cofactor biosynthesis; pyridoxine 5'-phosphate biosynthesis; pyridoxine 5'-phosphate from D-erythrose 4-phosphate: step 1/5. Functionally, catalyzes the NAD-dependent conversion of D-erythrose 4-phosphate to 4-phosphoerythronate. The polypeptide is D-erythrose-4-phosphate dehydrogenase (Vibrio parahaemolyticus serotype O3:K6 (strain RIMD 2210633)).